Reading from the N-terminus, the 1443-residue chain is Lysophospholipase NTE1 (1443 aa).

Residues Met-1 to Asn-59 lie on the Lumenal side of the membrane. Residues Leu-60 to Val-80 form a helical membrane-spanning segment. At Arg-81–Met-1443 the chain is on the cytoplasmic side. The span at Ala-103–Gly-118 shows a compositional bias: polar residues. Disordered regions lie at residues Ala-103–Glu-122 and Lys-199–His-251. Residues Glu-210–Val-235 show a composition bias toward acidic residues. A nucleoside 3',5'-cyclic phosphate contacts are provided by residues Leu-619 to Leu-750 and Lys-746 to Lys-871. The PNPLA domain occupies Leu-1136–Lys-1300. The GXGXXG motif lies at Gly-1140 to Gly-1145. A GXSXG motif is present at residues Gly-1167–Gly-1171. The Nucleophile role is filled by Ser-1169. The Proton acceptor role is filled by Asp-1287. Residues Asp-1287–Gly-1289 carry the DGA/G motif.

Belongs to the NTE family.

It localises to the endoplasmic reticulum membrane. The enzyme catalyses a 1-acyl-sn-glycero-3-phosphocholine + H2O = sn-glycerol 3-phosphocholine + a fatty acid + H(+). Its activity is regulated as follows. Inhibited by organophosphorus esters. In terms of biological role, intracellular phospholipase B that catalyzes the double deacylation of phosphatidylcholine (PC) to glycerophosphocholine (GroPCho). Plays an important role in membrane lipid homeostasis. Responsible for the rapid PC turnover in response to inositol, elevated temperatures, or when choline is present in the growth medium. The polypeptide is Lysophospholipase NTE1 (NTE1) (Lodderomyces elongisporus (strain ATCC 11503 / CBS 2605 / JCM 1781 / NBRC 1676 / NRRL YB-4239) (Yeast)).